Consider the following 238-residue polypeptide: 6-phosphogluconolactonase (238 aa).

It belongs to the glucosamine/galactosamine-6-phosphate isomerase family. 6-phosphogluconolactonase subfamily.

The enzyme catalyses 6-phospho-D-glucono-1,5-lactone + H2O = 6-phospho-D-gluconate + H(+). Its pathway is carbohydrate degradation; pentose phosphate pathway; D-ribulose 5-phosphate from D-glucose 6-phosphate (oxidative stage): step 2/3. Its function is as follows. Hydrolysis of 6-phosphogluconolactone to 6-phosphogluconate. This is 6-phosphogluconolactonase (pgl) from Pseudomonas aeruginosa (strain ATCC 15692 / DSM 22644 / CIP 104116 / JCM 14847 / LMG 12228 / 1C / PRS 101 / PAO1).